The sequence spans 136 residues: Putative covalently bound cell wall protein 22 (136 aa).

The first 18 residues, 1–18 (MQFSTVASIAAIAAVASA), serve as a signal peptide directing secretion. N-linked (GlcNAc...) asparagine glycosylation is found at Asn-21 and Asn-82. The interval 73 to 110 (PLPTTEAPKNTTSPAPTEKPTEKPTEKPTQQGSSTQTV) is disordered. Residues 99-110 (KPTQQGSSTQTV) are compositionally biased toward low complexity. A lipid anchor (GPI-anchor amidated glycine) is attached at Gly-115. A propeptide spans 116–136 (AAVKALPAAGALLAGAAALLL) (removed in mature form).

The protein belongs to the PGA59 family. In terms of processing, the GPI-anchor is attached to the protein in the endoplasmic reticulum and serves to target the protein to the cell surface. There, the glucosamine-inositol phospholipid moiety is cleaved off and the GPI-modified mannoprotein is covalently attached via its lipidless GPI glycan remnant to the 1,6-beta-glucan of the outer cell wall layer.

The protein localises to the secreted. The protein resides in the cell wall. It localises to the membrane. Cell wall protein necessary for cell wall integrity. The polypeptide is Putative covalently bound cell wall protein 22 (CCW22) (Saccharomyces cerevisiae (strain ATCC 204508 / S288c) (Baker's yeast)).